The chain runs to 525 residues: GMP synthase [glutamine-hydrolyzing] (525 aa).

In terms of domain architecture, Glutamine amidotransferase type-1 spans 9 to 207 (RILILDFGSQ…VRDICQCEAL (199 aa)). Cys86 acts as the Nucleophile in catalysis. Residues His181 and Glu183 contribute to the active site. Residues 208–400 (WTPAKIIDDA…LGLPYDMLYR (193 aa)) enclose the GMPS ATP-PPase domain. Position 235 to 241 (235 to 241 (SGGVDSS)) interacts with ATP.

As to quaternary structure, homodimer.

It catalyses the reaction XMP + L-glutamine + ATP + H2O = GMP + L-glutamate + AMP + diphosphate + 2 H(+). It functions in the pathway purine metabolism; GMP biosynthesis; GMP from XMP (L-Gln route): step 1/1. Catalyzes the synthesis of GMP from XMP. This chain is GMP synthase [glutamine-hydrolyzing], found in Klebsiella pneumoniae (strain 342).